Consider the following 636-residue polypeptide: Asparagine synthetase domain-containing protein 1 (636 aa).

The active-site Nucleophile is Cys2. A Glutamine amidotransferase type-2 domain is found at 2 to 187 (CGICCVVALS…ASGIFKMDLR (186 aa)). Residues 291 to 607 (QFIDVLDEAV…GLEAASILPK (317 aa)) form the Asparagine synthetase domain.

The protein is Asparagine synthetase domain-containing protein 1 (ASNSD1) of Gallus gallus (Chicken).